A 251-amino-acid polypeptide reads, in one-letter code: Triosephosphate isomerase (251 aa).

Residues Asn-12 and Lys-14 each coordinate substrate. The active-site Electrophile is the His-96. Residue Glu-168 is the Proton acceptor of the active site.

This sequence belongs to the triosephosphate isomerase family. In terms of assembly, homodimer.

Its subcellular location is the cytoplasm. The protein resides in the glycosome. The enzyme catalyses D-glyceraldehyde 3-phosphate = dihydroxyacetone phosphate. It functions in the pathway carbohydrate biosynthesis; gluconeogenesis. The protein operates within carbohydrate degradation; glycolysis; D-glyceraldehyde 3-phosphate from glycerone phosphate: step 1/1. The chain is Triosephosphate isomerase from Leishmania mexicana.